Here is a 447-residue protein sequence, read N- to C-terminus: Exodeoxyribonuclease 7 large subunit (447 aa).

It belongs to the XseA family. Heterooligomer composed of large and small subunits.

The protein resides in the cytoplasm. The enzyme catalyses Exonucleolytic cleavage in either 5'- to 3'- or 3'- to 5'-direction to yield nucleoside 5'-phosphates.. In terms of biological role, bidirectionally degrades single-stranded DNA into large acid-insoluble oligonucleotides, which are then degraded further into small acid-soluble oligonucleotides. This chain is Exodeoxyribonuclease 7 large subunit, found in Geobacter sulfurreducens (strain ATCC 51573 / DSM 12127 / PCA).